The primary structure comprises 61 residues: Alpha-conotoxin-like PnMGMR-02 (61 aa).

The N-terminal stretch at 1 to 21 is a signal peptide; that stretch reads MGMRMMFTVFLLVVLATTVVS. The propeptide occupies 22–44; sequence FTSDRASDGGNAAASDLIALTIK. 2 cysteine pairs are disulfide-bonded: C46-C52 and C47-C60. Positions 48 to 50 are ser-Xaa-Pro motif, crucial for potent interaction with nAChR; it reads SRP. Residue C60 is modified to Cysteine amide.

This sequence belongs to the conotoxin A superfamily. As to expression, expressed by the venom duct.

The protein resides in the secreted. Its function is as follows. Alpha-conotoxins act on postsynaptic membranes, they bind to the nicotinic acetylcholine receptors (nAChR) and thus inhibit them. This toxin blocks mammalian nAChRs (alpha-7 &gt; alpha-3/beta-2). The protein is Alpha-conotoxin-like PnMGMR-02 of Conus pennaceus (Feathered cone).